Reading from the N-terminus, the 527-residue chain is Laccase-5 (527 aa).

The N-terminal stretch at 1 to 23 (MGKYHSFVNVVALSLSLSGRVFG) is a signal peptide. Positions 25–150 (IGPVTDLTIS…DGLRGPLVVY (126 aa)) constitute a Plastocyanin-like 1 domain. Asparagine 74 and asparagine 77 each carry an N-linked (GlcNAc...) asparagine glycan. Cu cation-binding residues include histidine 87, histidine 89, histidine 132, and histidine 134. Disulfide bonds link cysteine 108/cysteine 516 and cysteine 140/cysteine 230. Residues asparagine 156, asparagine 209, asparagine 233, asparagine 242, asparagine 276, asparagine 317, asparagine 358, asparagine 366, asparagine 393, and asparagine 402 are each glycosylated (N-linked (GlcNAc...) asparagine). Positions 162-306 (VDDDTTVITL…GGVNSAILRY (145 aa)) constitute a Plastocyanin-like 2 domain. The Plastocyanin-like 3 domain maps to 373 to 498 (TVPVLLQILS…AGFAIVWGED (126 aa)). Histidine 425, histidine 428, histidine 430, histidine 480, cysteine 481, histidine 482, and histidine 486 together coordinate Cu cation.

This sequence belongs to the multicopper oxidase family. In terms of assembly, homodimer. The cofactor is Cu cation.

The protein resides in the secreted. It carries out the reaction 4 hydroquinone + O2 = 4 benzosemiquinone + 2 H2O. Lignin degradation and detoxification of lignin-derived products. The sequence is that of Laccase-5 (LCC5) from Trametes villosa (White-rot fungus).